Here is a 287-residue protein sequence, read N- to C-terminus: MLDESYESRIIDGKVLAQQVEEEVRSGVEDLESNRGITPGLATILVGDDPASKMYVRLKHRACERVGIRAEDFLLPADSTQEELLALIDSLNNNKDVHGILLQLPLPEHFSPQEAMEAISPAKDADGFHPYNMGKLMIGDEGLVPCTPHGVIRALEEYNVPVKGKNAVIVGHSNVVGKPMAAMLLNRNASVSVCHIFTDDLKKYTLGADILVVAAGVKHLIKADMVKEGAVIFDVGITKEEDGVYGDVDFENVIKKASLITPVPGGVGPLTVAMLMKHVLMCAEKSL.

Residues 171 to 173, isoleucine 196, and isoleucine 237 contribute to the NADP(+) site; that span reads GHS.

It belongs to the tetrahydrofolate dehydrogenase/cyclohydrolase family. As to quaternary structure, homodimer.

It carries out the reaction (6R)-5,10-methylene-5,6,7,8-tetrahydrofolate + NADP(+) = (6R)-5,10-methenyltetrahydrofolate + NADPH. The catalysed reaction is (6R)-5,10-methenyltetrahydrofolate + H2O = (6R)-10-formyltetrahydrofolate + H(+). It participates in one-carbon metabolism; tetrahydrofolate interconversion. Functionally, catalyzes the oxidation of 5,10-methylenetetrahydrofolate to 5,10-methenyltetrahydrofolate and then the hydrolysis of 5,10-methenyltetrahydrofolate to 10-formyltetrahydrofolate. The sequence is that of Bifunctional protein FolD from Methanosarcina mazei (strain ATCC BAA-159 / DSM 3647 / Goe1 / Go1 / JCM 11833 / OCM 88) (Methanosarcina frisia).